The following is a 482-amino-acid chain: Glycogen synthase (482 aa).

ADP-alpha-D-glucose is bound at residue K21.

It belongs to the glycosyltransferase 1 family. Bacterial/plant glycogen synthase subfamily.

It carries out the reaction [(1-&gt;4)-alpha-D-glucosyl](n) + ADP-alpha-D-glucose = [(1-&gt;4)-alpha-D-glucosyl](n+1) + ADP + H(+). It participates in glycan biosynthesis; glycogen biosynthesis. Its function is as follows. Synthesizes alpha-1,4-glucan chains using ADP-glucose. The sequence is that of Glycogen synthase from Clostridium perfringens (strain 13 / Type A).